Consider the following 191-residue polypeptide: Cathelicidin-related peptide Oh-Cath (191 aa).

The first 22 residues, 1–22, serve as a signal peptide directing secretion; the sequence is MEGFFWKTLLVVGALAIGGTSS. Positions 23–161 are excised as a propeptide; the sequence is LPHKPLTYEE…DQPRRVKRFK (139 aa). 2 disulfide bridges follow: C81–C92 and C103–C120. Residues 125–151 show a composition bias toward acidic residues; it reads EEEEQKQEEGNEEEKEVEKEEKEEDEK. Residues 125 to 154 form a disordered region; that stretch reads EEEEQKQEEGNEEEKEVEKEEKEEDEKDQP.

It belongs to the cathelicidin family. In terms of tissue distribution, expressed by the venom gland.

The protein localises to the secreted. It localises to the target cell membrane. Potent antimicrobial peptide against Gram-negative (MIC=0.25 ug/ml against E.coli ATCC 25922, MIC=0.5 ug/ml against P.aeruginosa) and Gram-positive bacteria (MIC=64 ug/ml against E.faecalis, MIC=64 ug/ml against S.aureus). Adopts an amphipathic alpha helical conformation, that may allow to partition into the target membrane. Low hemolytic activities have been observed on mammalian cells. This is Cathelicidin-related peptide Oh-Cath from Ophiophagus hannah (King cobra).